A 286-amino-acid chain; its full sequence is 4-diphosphocytidyl-2-C-methyl-D-erythritol kinase (286 aa).

Lys-11 is an active-site residue. 93–103 (PFGAGLGGGSS) contacts ATP. Asp-135 is a catalytic residue.

Belongs to the GHMP kinase family. IspE subfamily.

The catalysed reaction is 4-CDP-2-C-methyl-D-erythritol + ATP = 4-CDP-2-C-methyl-D-erythritol 2-phosphate + ADP + H(+). Its pathway is isoprenoid biosynthesis; isopentenyl diphosphate biosynthesis via DXP pathway; isopentenyl diphosphate from 1-deoxy-D-xylulose 5-phosphate: step 3/6. Functionally, catalyzes the phosphorylation of the position 2 hydroxy group of 4-diphosphocytidyl-2C-methyl-D-erythritol. The chain is 4-diphosphocytidyl-2-C-methyl-D-erythritol kinase from Chlorobaculum tepidum (strain ATCC 49652 / DSM 12025 / NBRC 103806 / TLS) (Chlorobium tepidum).